The chain runs to 156 residues: 6,7-dimethyl-8-ribityllumazine synthase (156 aa).

Residues F22, 57–59 (AVE), and 81–83 (TVI) contribute to the 5-amino-6-(D-ribitylamino)uracil site. Position 86–87 (86–87 (GT)) interacts with (2S)-2-hydroxy-3-oxobutyl phosphate. H89 (proton donor) is an active-site residue. A 5-amino-6-(D-ribitylamino)uracil-binding site is contributed by F114. R128 contacts (2S)-2-hydroxy-3-oxobutyl phosphate.

It belongs to the DMRL synthase family. In terms of assembly, forms an icosahedral capsid composed of 60 subunits, arranged as a dodecamer of pentamers.

It catalyses the reaction (2S)-2-hydroxy-3-oxobutyl phosphate + 5-amino-6-(D-ribitylamino)uracil = 6,7-dimethyl-8-(1-D-ribityl)lumazine + phosphate + 2 H2O + H(+). It functions in the pathway cofactor biosynthesis; riboflavin biosynthesis; riboflavin from 2-hydroxy-3-oxobutyl phosphate and 5-amino-6-(D-ribitylamino)uracil: step 1/2. Functionally, catalyzes the formation of 6,7-dimethyl-8-ribityllumazine by condensation of 5-amino-6-(D-ribitylamino)uracil with 3,4-dihydroxy-2-butanone 4-phosphate. This is the penultimate step in the biosynthesis of riboflavin. In Vibrio campbellii (strain ATCC BAA-1116), this protein is 6,7-dimethyl-8-ribityllumazine synthase.